The following is a 615-amino-acid chain: DNA mismatch repair protein MutL (615 aa).

The disordered stretch occupies residues 362–397 (HFAEPAVREPVAPRYSPAPASGSRPAASWPNAQPGY). Over residues 373-391 (APRYSPAPASGSRPAASWP) the composition is skewed to low complexity.

It belongs to the DNA mismatch repair MutL/HexB family.

In terms of biological role, this protein is involved in the repair of mismatches in DNA. It is required for dam-dependent methyl-directed DNA mismatch repair. May act as a 'molecular matchmaker', a protein that promotes the formation of a stable complex between two or more DNA-binding proteins in an ATP-dependent manner without itself being part of a final effector complex. The sequence is that of DNA mismatch repair protein MutL from Escherichia coli O6:H1 (strain CFT073 / ATCC 700928 / UPEC).